Reading from the N-terminus, the 810-residue chain is DNA replication licensing factor mcm-6 (810 aa).

The MCM domain maps to 346–553 (IEKNIVDSLF…VTDYAIARRI (208 aa)). ATP is bound by residues Ser400, Thr401, Ala402, Lys403, Ser404, and Asn505. The Arginine finger motif lies at 529–532 (SRFD). The ADP site is built by Arg622 and Glu625. Residues 685–705 (KENQGGDDDMEHDGEKDETAK) are disordered.

It belongs to the MCM family. As to quaternary structure, component of the mcm2-7 complex. The complex forms a toroidal hexameric ring with the proposed subunit order mcm2-mcm6-mcm4-mcm7-mcm3-mcm5 (By simililarity).

It is found in the nucleus. It carries out the reaction ATP + H2O = ADP + phosphate + H(+). Functionally, acts as a component of the MCM2-7 complex (MCM complex) which is the replicative helicase essential for 'once per cell cycle' DNA replication initiation and elongation in eukaryotic cells. Core component of CDC45-MCM-GINS (CMG) helicase, the molecular machine that unwinds template DNA during replication, and around which the replisome is built. The active ATPase sites in the MCM2-7 ring are formed through the interaction surfaces of two neighboring subunits such that a critical structure of a conserved arginine finger motif is provided in trans relative to the ATP-binding site of the Walker A box of the adjacent subunit. The six ATPase active sites, however, are likely to contribute differentially to the complex helicase activity. This chain is DNA replication licensing factor mcm-6, found in Caenorhabditis briggsae.